Reading from the N-terminus, the 209-residue chain is RNA chaperone ProQ (209 aa).

The tract at residues 105-148 is disordered; sequence ESQDKAKAKRAALAPKPAAKKAPKKVAVPQRAKTERPAKPAPKA.

This sequence belongs to the ProQ family.

It is found in the cytoplasm. Functionally, RNA chaperone with significant RNA binding, RNA strand exchange and RNA duplexing activities. The sequence is that of RNA chaperone ProQ from Shewanella baltica (strain OS223).